The sequence spans 737 residues: Autophagy-related protein 22 (737 aa).

A disordered region spans residues 115–154; it reads RMSPANAGDNSDSYPYGDDTDGDSSSGLPPPRYPGDDTRP. The segment covering 125-141 has biased composition (low complexity); that stretch reads SDSYPYGDDTDGDSSSG. 4 helical membrane passes run 166-186, 232-252, 264-284, and 289-309; these read YAFAAEVYVICGIGSFIPILL, SFAMYTFSVSVLLQALLVVSI, KLLLAFAWIGSACVMAYIFIS, and LIGALLAIISNTSFGASFVLL. The tract at residues 327–353 is disordered; that stretch reads GDYGSPGYATTEEGDDEDDEYQEDSTR. A compositionally biased stretch (acidic residues) spans 338-349; the sequence is EEGDDEDDEYQE. Asn354 is a glycosylation site (N-linked (GlcNAc...) asparagine). A helical transmembrane segment spans residues 395-415; that stretch reads GIGIGYIAGLFLQCVAIAILI. Residue Asn419 is glycosylated (N-linked (GlcNAc...) asparagine). 7 helical membrane passes run 426-446, 487-507, 524-544, 559-579, 593-613, 632-652, and 661-681; these read IVLCVIGAWWAIFTIPAAMWL, LVDIVLFLAGWFLLSDAIATT, WALGMINVISTASGILGAFSW, ILACIALFELIPLYGLMGYLP, WEMYPLAAIYGFVLGGLSGYC, LYAITDKGSSVFGPAIVGAII, and AFWFLAAIVGTPALFIWFINV.

The protein belongs to the ATG22 family.

The protein resides in the vacuole membrane. In terms of biological role, vacuolar effluxer which mediate the efflux of amino acids resulting from autophagic degradation. The release of autophagic amino acids allows the maintenance of protein synthesis and viability during nitrogen starvation. This is Autophagy-related protein 22 (apg-11) from Neurospora crassa (strain ATCC 24698 / 74-OR23-1A / CBS 708.71 / DSM 1257 / FGSC 987).